The following is a 94-amino-acid chain: Large ribosomal subunit protein bL28A (94 aa).

A disordered region spans residues 63 to 94; that stretch reads GHRGRRRAARAGSAPAHFARQAGSSLRTAAIL. Residues 72-82 show a composition bias toward low complexity; sequence RAGSAPAHFAR. The segment covering 84–94 has biased composition (polar residues); that stretch reads AGSSLRTAAIL.

It belongs to the bacterial ribosomal protein bL28 family.

This Mycobacterium bovis (strain ATCC BAA-935 / AF2122/97) protein is Large ribosomal subunit protein bL28A (rpmB1).